Reading from the N-terminus, the 353-residue chain is Abasic site processing protein HMCES (353 aa).

The active-site Nucleophile is the Cys-2. Thiazolidine linkage to a ring-opened DNA abasic site is present on Cys-2. Glu-127 is a catalytic residue. Residues Lys-148 and Lys-151 each participate in a glycyl lysine isopeptide (Lys-Gly) (interchain with G-Cter in SUMO2) cross-link. A Phosphoserine modification is found at Ser-160. Glycyl lysine isopeptide (Lys-Gly) (interchain with G-Cter in SUMO2) cross-links involve residues Lys-274 and Lys-275. The tract at residues 292-353 is disordered; that stretch reads TKSPKKEVPD…DEPVAKRPNS (62 aa). Ser-294 carries the post-translational modification Phosphoserine. Residues 295-307 are compositionally biased toward basic and acidic residues; the sequence is PKKEVPDSPKKDA. Residue Lys-305 forms a Glycyl lysine isopeptide (Lys-Gly) (interchain with G-Cter in SUMO2) linkage. Ser-321 carries the post-translational modification Phosphoserine. Residues 332–338 carry the PIP-box motif; that stretch reads SLLDRWL. A compositionally biased stretch (basic and acidic residues) spans 336 to 353; that stretch reads RWLKQEKEDEPVAKRPNS. Glycyl lysine isopeptide (Lys-Gly) (interchain with G-Cter in SUMO2) cross-links involve residues Lys-339 and Lys-342.

It belongs to the SOS response-associated peptidase family. In terms of assembly, interacts (via PIP-box motif) with PCNA. Ubiquitinated; the covalent HMCES DNA-protein cross-link is ubiquitinated, leading to its degradation by the proteasome.

The protein resides in the chromosome. Its activity is regulated as follows. Formation and reversal of DNA-protein cross-link depends on DNA context. Catalyzes formation of the thiazolidine linkage in presence of abasic sites in single-stranded DNA. Mediates the reversal of the thiazolidine cross-link in presence of double stranded DNA. Its function is as follows. Sensor of abasic sites in single-stranded DNA (ssDNA) required to preserve genome integrity by promoting error-free repair of abasic sites. Acts as an enzyme that recognizes and binds abasic sites in ssDNA at replication forks and chemically modifies the lesion by forming a covalent cross-link with DNA: forms a stable thiazolidine linkage between a ring-opened abasic site and the alpha-amino and sulfhydryl substituents of its N-terminal catalytic cysteine residue. Promotes error-free repair by protecting abasic sites from translesion synthesis (TLS) polymerases and endonucleases that are error-prone and would generate mutations and double-strand breaks. The HMCES DNA-protein cross-link is then either reversed or degraded. HMCES is able to catalyze the reversal of its thiazolidine cross-link and cycle between a cross-link and a non-cross-linked state depending on DNA context: mediates self-reversal of the thiazolidine cross-link in double stranded DNA, allowing APEX1 to initiate downstream repair of abasic sites. The HMCES DNA-protein cross-link can also be degraded by the SPRTN metalloprotease following unfolding by the BRIP1/FANCJ helicase. Has preference for ssDNA, but can also accommodate double-stranded DNA with 3' or 5' overhang (dsDNA), and dsDNA-ssDNA 3' junction. Plays a protective role during somatic hypermutation of immunoglobulin genes in B-cells: acts via its ability to form covalent cross-links with abasic sites, thereby limiting the accumulation of deletions in somatic hypermutation target regions. Also involved in class switch recombination (CSR) in B-cells independently of the formation of a DNA-protein cross-link: acts by binding and protecting ssDNA overhangs to promote DNA double-strand break repair through the microhomology-mediated alternative-end-joining (Alt-EJ) pathway. Acts as a protease: mediates autocatalytic processing of its N-terminal methionine in order to expose the catalytic cysteine. This is Abasic site processing protein HMCES from Rattus norvegicus (Rat).